We begin with the raw amino-acid sequence, 79 residues long: Conotoxin Tr6.2 (79 aa).

Residues 1–22 form the signal peptide; it reads MKLTCVLIISVLFLTASQLITA. The propeptide occupies 23-47; that stretch reads VYSRDKQQYRAARLRDEMRNLKGAR. Intrachain disulfides connect Cys-49-Cys-62, Cys-56-Cys-67, and Cys-61-Cys-77. 4-hydroxyproline is present on residues Pro-60 and Pro-63.

Belongs to the conotoxin O1 superfamily. As to expression, expressed by the venom duct.

The protein resides in the secreted. Its function is as follows. Ion channel inhibitor that inhibits the increase in intracellular calcium upon depolarization in DRG neurons. In vivo, both intraperitoneal and intracranial injections into mice induce hyperactivity. The sequence is that of Conotoxin Tr6.2 from Conus terebra (Sea snail).